Reading from the N-terminus, the 523-residue chain is Light-independent protochlorophyllide reductase subunit B (523 aa).

Asp36 serves as a coordination point for [4Fe-4S] cluster. Asp290 serves as the catalytic Proton donor. 425–426 serves as a coordination point for substrate; sequence GL.

It belongs to the ChlB/BchB/BchZ family. As to quaternary structure, protochlorophyllide reductase is composed of three subunits; ChlL, ChlN and ChlB. Forms a heterotetramer of two ChlB and two ChlN subunits. [4Fe-4S] cluster is required as a cofactor.

It catalyses the reaction chlorophyllide a + oxidized 2[4Fe-4S]-[ferredoxin] + 2 ADP + 2 phosphate = protochlorophyllide a + reduced 2[4Fe-4S]-[ferredoxin] + 2 ATP + 2 H2O. The protein operates within porphyrin-containing compound metabolism; chlorophyll biosynthesis (light-independent). Component of the dark-operative protochlorophyllide reductase (DPOR) that uses Mg-ATP and reduced ferredoxin to reduce ring D of protochlorophyllide (Pchlide) to form chlorophyllide a (Chlide). This reaction is light-independent. The NB-protein (ChlN-ChlB) is the catalytic component of the complex. This chain is Light-independent protochlorophyllide reductase subunit B, found in Prochlorococcus marinus (strain MIT 9215).